The primary structure comprises 208 residues: Large ribosomal subunit protein uL4 (208 aa).

The segment at 44–85 (RQGTKKTKTRAEVRGGGKKPWRQKGTGRARQGSIRAPHWRGG) is disordered. Over residues 59–70 (GGKKPWRQKGTG) the composition is skewed to basic residues.

The protein belongs to the universal ribosomal protein uL4 family. In terms of assembly, part of the 50S ribosomal subunit.

Functionally, one of the primary rRNA binding proteins, this protein initially binds near the 5'-end of the 23S rRNA. It is important during the early stages of 50S assembly. It makes multiple contacts with different domains of the 23S rRNA in the assembled 50S subunit and ribosome. Its function is as follows. Forms part of the polypeptide exit tunnel. The protein is Large ribosomal subunit protein uL4 of Mesoplasma florum (strain ATCC 33453 / NBRC 100688 / NCTC 11704 / L1) (Acholeplasma florum).